The chain runs to 411 residues: 4-coumarate--CoA ligase (411 aa).

Belongs to the ATP-dependent AMP-binding enzyme family.

It catalyses the reaction (E)-4-coumarate + ATP + CoA = (E)-4-coumaroyl-CoA + AMP + diphosphate. In terms of biological role, converts p-coumaric acid into p-coumaryl CoA. This is necessary for the activation of the photoactive yellow protein (PYP) chromophore. In Cereibacter sphaeroides (strain ATCC 17023 / DSM 158 / JCM 6121 / CCUG 31486 / LMG 2827 / NBRC 12203 / NCIMB 8253 / ATH 2.4.1.) (Rhodobacter sphaeroides), this protein is 4-coumarate--CoA ligase (pcl).